A 260-amino-acid polypeptide reads, in one-letter code: Pyridoxine 5'-phosphate synthase (260 aa).

3-amino-2-oxopropyl phosphate-binding residues include N10 and R21. Catalysis depends on H46, which acts as the Proton acceptor. The 1-deoxy-D-xylulose 5-phosphate site is built by R48 and H53. The active-site Proton acceptor is E76. Residue T113 coordinates 1-deoxy-D-xylulose 5-phosphate. H204 functions as the Proton donor in the catalytic mechanism. Residues D205 and 227–228 (GH) contribute to the 3-amino-2-oxopropyl phosphate site.

The protein belongs to the PNP synthase family. In terms of assembly, homooctamer; tetramer of dimers.

It localises to the cytoplasm. The catalysed reaction is 3-amino-2-oxopropyl phosphate + 1-deoxy-D-xylulose 5-phosphate = pyridoxine 5'-phosphate + phosphate + 2 H2O + H(+). The protein operates within cofactor biosynthesis; pyridoxine 5'-phosphate biosynthesis; pyridoxine 5'-phosphate from D-erythrose 4-phosphate: step 5/5. Catalyzes the complicated ring closure reaction between the two acyclic compounds 1-deoxy-D-xylulose-5-phosphate (DXP) and 3-amino-2-oxopropyl phosphate (1-amino-acetone-3-phosphate or AAP) to form pyridoxine 5'-phosphate (PNP) and inorganic phosphate. The sequence is that of Pyridoxine 5'-phosphate synthase from Xylella fastidiosa (strain M23).